A 432-amino-acid polypeptide reads, in one-letter code: UDP-N-acetylglucosamine 1-carboxyvinyltransferase (432 aa).

Residue 22 to 23 (KN) participates in phosphoenolpyruvate binding. Arg102 serves as a coordination point for UDP-N-acetyl-alpha-D-glucosamine. Cys126 acts as the Proton donor in catalysis. At Cys126 the chain carries 2-(S-cysteinyl)pyruvic acid O-phosphothioketal. Residues 131-135 (RPVDL), Asp317, and Ile339 contribute to the UDP-N-acetyl-alpha-D-glucosamine site.

Belongs to the EPSP synthase family. MurA subfamily.

The protein resides in the cytoplasm. The enzyme catalyses phosphoenolpyruvate + UDP-N-acetyl-alpha-D-glucosamine = UDP-N-acetyl-3-O-(1-carboxyvinyl)-alpha-D-glucosamine + phosphate. It functions in the pathway cell wall biogenesis; peptidoglycan biosynthesis. In terms of biological role, cell wall formation. Adds enolpyruvyl to UDP-N-acetylglucosamine. This Rhodospirillum centenum (strain ATCC 51521 / SW) protein is UDP-N-acetylglucosamine 1-carboxyvinyltransferase.